A 227-amino-acid chain; its full sequence is UPF0441 protein YPO0661/y3517/YP_2976 (227 aa).

Residues 198-227 (GGFGESVAKQSSMQRSAATSSKTTTRSMGG) form a disordered region. Over residues 212-227 (RSAATSSKTTTRSMGG) the composition is skewed to low complexity.

Belongs to the UPF0441 family.

The polypeptide is UPF0441 protein YPO0661/y3517/YP_2976 (Yersinia pestis).